The chain runs to 713 residues: MSRPGPKPAASSRPRRGAAASHTQEHVNEKNIGSSSKPAEKKGSDEVTASSAATGTSPRMSTTGAKAVKIESEKSQSSEPPVIHEKKPKGKPKEGSEPQTLPKHASDTGSKHAHKEKALSRSNEQIVSEKSSESKTKFQDAPSADGESVAGGVTVATASDKVVVKKKEKKSLTPTLPMESTLNKLSDKSGVNAALDDLIDTLGECEDTNKDDPPYTGPVVLDPMDSTYLEALGIKEGTIPPEYRKLLEKNEAITGPLPDSPKPMGIDHAIDALSSDFTCSSPTGKQTEKEKSTGESSKAQSAGVTRSAVPPQEKKRKVEEEVMNDQALQALSDSLGTRQPDPQSHLRQAKQVKEAKAKEERQEKCGEDEDTVPAEYRLKPAKDKDGKPLLPEPEETSKCLSESELIGELSADFVQPTYQEKPSMPAAKIKKGVVPDDAVETLARSLGTRKEDPEDEKSLVDKVKEKAKEEDHEKLGEKEETIPPDYRLEIVKDKDGKPLLPKEAEEQLPPLSDDFLLDALSQDFSSPANILSLGFEDAKLSAAVSETVSQVPAPSNHTAAPPPGTERRDKELDDALDELSDSLGQRQPDPDENKPLDDKVKEKIKAEHSEKLGERDDTIPPEYRHLLDNDGKDKPEKPLTKNTEKLGQDQDPIDALSEDLDSCPPTTETSQNTTKEKGKKTSSSKASKNEEKTKDSSKKTEEVPKPKVDEDAT.

A compositionally biased stretch (low complexity) spans 1-21; the sequence is MSRPGPKPAASSRPRRGAAAS. The interval 1 to 152 is disordered; the sequence is MSRPGPKPAA…SADGESVAGG (152 aa). Positions 47–64 are enriched in polar residues; that stretch reads VTASSAATGTSPRMSTTG. Position 57 is a phosphoserine (S57). A Glycyl lysine isopeptide (Lys-Gly) (interchain with G-Cter in SUMO2) cross-link involves residue K69. N6-acetyllysine is present on K86. A compositionally biased stretch (polar residues) spans 120–129; the sequence is SRSNEQIVSE. Residues S122 and S171 each carry the phosphoserine modification. Phosphothreonine is present on T173. An Inhibitory domain 1 repeat occupies 208–260; the sequence is TNKDDPPYTGPVVLDPMDSTYLEALGIKEGTIPPEYRKLLEKNEAITGPLPDS. A disordered region spans residues 253–402; that stretch reads ITGPLPDSPK…PEETSKCLSE (150 aa). Phosphoserine occurs at positions 260 and 281. Polar residues-rich tracts occupy residues 275 to 285, 294 to 304, and 326 to 346; these read SDFTCSSPTGK, GESSKAQSAGV, and QALQALSDSLGTRQPDPQSHL. One copy of the Inhibitory domain 2 repeat lies at 341–393; the sequence is DPQSHLRQAKQVKEAKAKEERQEKCGEDEDTVPAEYRLKPAKDKDGKPLLPEP. Basic and acidic residues-rich tracts occupy residues 351–365 and 376–387; these read QVKEAKAKEERQEKC and YRLKPAKDKDGK. 4 positions are modified to phosphoserine: S401, S403, S410, and S445. The disordered stretch occupies residues 442–507; it reads LARSLGTRKE…PLLPKEAEEQ (66 aa). Residues 448 to 505 show a composition bias toward basic and acidic residues; sequence TRKEDPEDEKSLVDKVKEKAKEEDHEKLGEKEETIPPDYRLEIVKDKDGKPLLPKEAE. Residues 451-504 form an Inhibitory domain 3 repeat; it reads EDPEDEKSLVDKVKEKAKEEDHEKLGEKEETIPPDYRLEIVKDKDGKPLLPKEA. Residues S521 and S532 each carry the phosphoserine modification. A compositionally biased stretch (polar residues) spans 544 to 558; that stretch reads VSETVSQVPAPSNHT. The tract at residues 544-713 is disordered; sequence VSETVSQVPA…PKPKVDEDAT (170 aa). S580 and S582 each carry phosphoserine. The Inhibitory domain 4 repeat unit spans residues 588-641; it reads PDPDENKPLDDKVKEKIKAEHSEKLGERDDTIPPEYRHLLDNDGKDKPEKPLTK. Composition is skewed to basic and acidic residues over residues 588–648 and 687–713; these read PDPD…KLGQ and SKNEEKTKDSSKKTEEVPKPKVDEDAT.

This sequence belongs to the protease inhibitor I27 (calpastatin) family.

Specific inhibition of calpain (calcium-dependent cysteine protease). Plays a key role in postmortem tenderization of meat and have been proposed to be involved in muscle protein degradation in living tissue. The polypeptide is Calpastatin (Cast) (Rattus norvegicus (Rat)).